Consider the following 55-residue polypeptide: Conotoxin Cal22d (55 aa).

Residues 1–5 constitute a propeptide that is removed on maturation; that stretch reads GRPSA.

In terms of processing, contains 4 disulfide bonds. In terms of tissue distribution, expressed by the venom duct.

Its subcellular location is the secreted. Its function is as follows. Probable neurotoxin with unknown target. Possibly targets ion channels. The polypeptide is Conotoxin Cal22d (Californiconus californicus (California cone)).